The sequence spans 505 residues: Neuronal acetylcholine receptor subunit alpha-3 (505 aa).

The signal sequence occupies residues Met1–Ala31. Over Ser32–Ile250 the chain is Extracellular. Residues Asn55 and Asn172 are each glycosylated (N-linked (GlcNAc...) asparagine). Intrachain disulfides connect Cys159-Cys173 and Cys223-Cys224. The chain crosses the membrane as a helical span at residues Pro251–Pro266. Residues Ser267–Asp268 are Cytoplasmic-facing. The helical transmembrane segment at Cys269 to Val285 threads the bilayer. The Extracellular portion of the chain corresponds to Phe286–Tyr307. The helical transmembrane segment at Leu308 to Leu326 threads the bilayer. The Cytoplasmic portion of the chain corresponds to Asn327–Val474. A phosphoserine mark is found at Ser413 and Ser416. A helical transmembrane segment spans residues Ile475 to Gly493. Over Leu494–Ala505 the chain is Extracellular.

Belongs to the ligand-gated ion channel (TC 1.A.9) family. Acetylcholine receptor (TC 1.A.9.1) subfamily. Alpha-3/CHRNA3 sub-subfamily. As to quaternary structure, neuronal AChR is composed of two different types of subunits: alpha and beta. CHRNA3/Alpha-3 subunit can be combined to CHRNA5/alpha-5, CHRNB2/beta-2 CHRNB3/beta-3 or CHRNB4/beta-4 to give rise to functional receptors. Forms stoichiometries such as (CHRNA3)2:(CHRNB4)3 or (CHRNA3:CHRNB4)2:CHRNB3. Part of a complex composed of STUB1/CHIP, VCP/p97, CHRNA3, and UBXN2A that modulates the ubiquitination and endoplasmic reticulum-associated degradation (ERAD) of CHRNA3. Within the complex UBXN2A acts as a scaffold protein required for the interaction of CHRNA3 with VCP/p97, this interaction also inhibits CHRNA3 ubiquitination by STUB1/CHIP and subsequently ERAD. Interacts with UBXN2A (via SEP domain), the interaction is required for the interaction of CHRNA3 in the STUB1:VCP:UBXN2A complex. Interacts with RIC3; which is required for proper folding and assembly. Interacts with LYPD6. In terms of processing, ubiquitinated; by STUB1/CHIP and thereafter degraded by the 26S proteosome complex.

It localises to the synaptic cell membrane. Its subcellular location is the cell membrane. The protein localises to the endoplasmic reticulum. It is found in the golgi apparatus. It catalyses the reaction Ca(2+)(in) = Ca(2+)(out). The enzyme catalyses K(+)(in) = K(+)(out). The catalysed reaction is Na(+)(in) = Na(+)(out). Its activity is regulated as follows. Activated by a myriad of ligands such as acetylcholine, cytisine, nicotine, choline and epibatidine. The heteropentamer CHRNA3:CHRNB2 activity is blocked by alpha-conotoxins ImI, ImII, PnIA, GID and MII. The heteropentamer CHRNA3:CHRNB4 activity is blocked by the alpha-conotoxin ImI and AuIB. Component of neuronal acetylcholine receptors (nAChRs) that function as pentameric, ligand-gated cation channels with high calcium permeability among other activities. nAChRs are excitatory neurotrasnmitter receptors formed by a collection of nAChR subunits known to mediate synaptic transmission in the nervous system and the neuromuscular junction. Each nAchR subunit confers differential attributes to channel properties, including activation, deactivation and desensitization kinetics, pH sensitivity, cation permeability, and binding to allosteric modulators. CHRNA3 forms heteropentameric neuronal acetylcholine receptors with CHRNB2 and CHRNB4, with CHRNA5, and CHRNB3 as accesory subunits. CHRNA3:CHRNB4 being predominant in neurons of the autonomic ganglia, it is known as ganglionic nicotinic receptor. CHRNA3:CHRNB4 or CHRNA3:CHRNA5:CHRNB4 play also an important role in the habenulo-interpeduncular tract, modulating the mesolimbic dopamine system and affecting reward circuits and addiction. Hypothalamic CHRNA3:CHRNB4 nAChR activation by nicotine leads to activation of POMC neurons and a decrease in food intake. Also expressed in the urothelium where it modulates reflex bladder activity by increasing intracellular calcium through extracellular influx and basal ATP release. The sequence is that of Neuronal acetylcholine receptor subunit alpha-3 from Homo sapiens (Human).